A 465-amino-acid chain; its full sequence is ATP synthase subunit beta (465 aa).

148 to 155 (GGAGVGKT) serves as a coordination point for ATP.

Belongs to the ATPase alpha/beta chains family. In terms of assembly, F-type ATPases have 2 components, CF(1) - the catalytic core - and CF(0) - the membrane proton channel. CF(1) has five subunits: alpha(3), beta(3), gamma(1), delta(1), epsilon(1). CF(0) has three main subunits: a(1), b(2) and c(9-12). The alpha and beta chains form an alternating ring which encloses part of the gamma chain. CF(1) is attached to CF(0) by a central stalk formed by the gamma and epsilon chains, while a peripheral stalk is formed by the delta and b chains.

It is found in the cell inner membrane. It catalyses the reaction ATP + H2O + 4 H(+)(in) = ADP + phosphate + 5 H(+)(out). Produces ATP from ADP in the presence of a proton gradient across the membrane. The catalytic sites are hosted primarily by the beta subunits. This chain is ATP synthase subunit beta, found in Neisseria gonorrhoeae (strain ATCC 700825 / FA 1090).